Here is a 646-residue protein sequence, read N- to C-terminus: Threonine--tRNA ligase (646 aa).

The TGS domain occupies 1-63 (MAQISLTFPD…ETDAKIAIHT (63 aa)). The catalytic stretch occupies residues 247-544 (DHRKLGREME…LIENYAGKLP (298 aa)). Positions 344, 395, and 521 each coordinate Zn(2+).

It belongs to the class-II aminoacyl-tRNA synthetase family. Homodimer. Requires Zn(2+) as cofactor.

It is found in the cytoplasm. The enzyme catalyses tRNA(Thr) + L-threonine + ATP = L-threonyl-tRNA(Thr) + AMP + diphosphate + H(+). In terms of biological role, catalyzes the attachment of threonine to tRNA(Thr) in a two-step reaction: L-threonine is first activated by ATP to form Thr-AMP and then transferred to the acceptor end of tRNA(Thr). Also edits incorrectly charged L-seryl-tRNA(Thr). In Cereibacter sphaeroides (strain ATCC 17029 / ATH 2.4.9) (Rhodobacter sphaeroides), this protein is Threonine--tRNA ligase.